A 492-amino-acid polypeptide reads, in one-letter code: Solute carrier family 2, facilitated glucose transporter member 1 (492 aa).

Methionine 1 carries the N-acetylmethionine modification. At 1-11 (MDPSSKKVTGR) the chain is on the cytoplasmic side. A helical membrane pass occupies residues 12–33 (LMLAVGGAVLGSLQFGYNTGVI). Residues 34 to 66 (NAPQKVIEEFYNQTWNHRYGEPIPSTTLTTLWS) are Extracellular-facing. A glycan (N-linked (GlcNAc...) asparagine) is linked at asparagine 45. The chain crosses the membrane as a helical span at residues 67 to 87 (LSVAIFSVGGMIGSFSVGLFV). Over 88 to 90 (NRF) the chain is Cytoplasmic. Residues 91-112 (GRRNSMLMMNLLAFVAAVLMGF) form a helical membrane-spanning segment. At 113 to 120 (SKLGKSFE) the chain is on the extracellular side. A helical transmembrane segment spans residues 121 to 144 (MLILGRFIIGVYCGLTTGFVPMYV). The Cytoplasmic portion of the chain corresponds to 145 to 155 (GEVSPTALRGA). A helical membrane pass occupies residues 156-176 (LGTLHQLGIVVGILIAQVFGL). Glutamine 161 is a binding site for D-glucose. Topologically, residues 177–185 (DSIMGNADL) are extracellular. Residues 186 to 206 (WPLLLSVIFIPALLQCILLPF) traverse the membrane as a helical segment. The Cytoplasmic portion of the chain corresponds to 207 to 271 (CPESPRFLLI…LFRSPAYRQP (65 aa)). At serine 226 the chain carries Phosphoserine. A helical transmembrane segment spans residues 272–293 (ILIAVVLQLSQQLSGINAVFYY). D-glucose contacts are provided by residues 282–283 (QQ) and asparagine 288. Residues 294-306 (STSIFEKAGVQQP) lie on the Extracellular side of the membrane. A helical transmembrane segment spans residues 307-328 (VYATIGSGIVNTAFTVVSLFVV). Asparagine 317 serves as a coordination point for D-glucose. The Cytoplasmic segment spans residues 329-334 (ERAGRR). A helical transmembrane segment spans residues 335–355 (TLHLIGLAGMAGCAVLMTIAL). The Extracellular portion of the chain corresponds to 356 to 365 (ALLERLPWMS). Residues 366–388 (YLSIVAIFGFVAFFEVGPGPIPW) traverse the membrane as a helical segment. Residues glutamate 380 and tryptophan 388 each coordinate D-glucose. Topologically, residues 389–401 (FIVAELFSQGPRP) are cytoplasmic. Residues 402–422 (AAIAVAGFSNWTSNFIVGMCF) form a helical membrane-spanning segment. Residues 423 to 429 (QYVEQLC) are Extracellular-facing. The chain crosses the membrane as a helical span at residues 430–450 (GPYVFIIFTVLLVLFFIFTYF). At 451–492 (KVPETKGRTFDEIASGFRQGGASQSDKTPEELFHPLGADSQV) the chain is on the cytoplasmic side. At serine 465 the chain carries Phosphoserine. Residues 468–492 (RQGGASQSDKTPEELFHPLGADSQV) form a disordered region. The residue at position 478 (threonine 478) is a Phosphothreonine. Serine 490 bears the Phosphoserine mark.

Belongs to the major facilitator superfamily. Sugar transporter (TC 2.A.1.1) family. Glucose transporter subfamily. As to quaternary structure, found in a complex with ADD2, DMTN and SLC2A1. Interacts (via C-terminus cytoplasmic region) with DMTN isoform 2. Interacts with SNX27; the interaction is required when endocytosed to prevent degradation in lysosomes and promote recycling to the plasma membrane. Interacts with GIPC (via PDZ domain). Interacts with STOM. Interacts with SGTA (via Gln-rich region). Interacts with isoform 1 of BSG. Interacts with SMIM43; the interaction may promote SLC2A1-mediated glucose transport to meet the energy needs of mesendoderm differentiation. Post-translationally, phosphorylation at Ser-226 by PKC promotes glucose uptake by increasing cell membrane localization. As to expression, retina (at protein level).

It localises to the cell membrane. Its subcellular location is the photoreceptor inner segment. The catalysed reaction is D-glucose(out) = D-glucose(in). The uptake of glucose is inhibited by cytochalasin B. Glucose uptake is increased in response to phorbol ester 12-O-tetradecanoylphorbol-13-acetate (TPA) treatment: TPA-induced glucose uptake requires phosphorylation at Ser-226. Facilitative glucose transporter, which is responsible for constitutive or basal glucose uptake. Has a very broad substrate specificity; can transport a wide range of aldoses including both pentoses and hexoses. Most important energy carrier of the brain: present at the blood-brain barrier and assures the energy-independent, facilitative transport of glucose into the brain. In association with BSG and NXNL1, promotes retinal cone survival by increasing glucose uptake into photoreceptors. Required for mesendoderm differentiation. This Mus musculus (Mouse) protein is Solute carrier family 2, facilitated glucose transporter member 1.